Consider the following 358-residue polypeptide: HLA class I histocompatibility antigen, alpha chain E (358 aa).

The first 21 residues, 1-21 (MVDGTLLLLLSEALALTQTWA), serve as a signal peptide directing secretion. Positions 22–111 (GSHSLKYFHT…LRGYYNQSEA (90 aa)) are alpha-1. Residues 22-305 (GSHSLKYFHT…KPASQPTIPI (284 aa)) lie on the Extracellular side of the membrane. Tyr-28, Glu-84, Ser-87, Asn-98, and Tyr-105 together coordinate a peptide antigen. The N-linked (GlcNAc...) asparagine glycan is linked to Asn-107. An alpha-2 region spans residues 112 to 203 (GSHTLQWMHG…EKGKETLLHL (92 aa)). A disulfide bond links Cys-122 and Cys-185. The a peptide antigen site is built by Ser-164, Lys-167, Gln-177, Tyr-180, and Tyr-192. An alpha-3 region spans residues 204 to 295 (EPPKTHVTHH…GLPEPVTLRW (92 aa)). One can recognise an Ig-like C1-type domain in the interval 206–294 (PKTHVTHHPI…EGLPEPVTLR (89 aa)). Cys-224 and Cys-280 are oxidised to a cystine. Residues 296–305 (KPASQPTIPI) form a connecting peptide region. Residues 306–329 (VGIIAGLVLLGSVVSGAVVAAVIW) form a helical membrane-spanning segment. The Cytoplasmic portion of the chain corresponds to 330–358 (RKKSSGGKGGSYSKAEWSDSAQGSESHSL). The segment at 333–358 (SSGGKGGSYSKAEWSDSAQGSESHSL) is disordered. Residues 348–358 (DSAQGSESHSL) are compositionally biased toward polar residues. Ser-353 is modified (phosphoserine).

This sequence belongs to the MHC class I family. Forms a heterotrimer with B2M and a self- or a pathogen-derived peptide (peptide-bound HLA-E-B2M). Similarly to MHC class Ia assembly, HLA-E-B2M heterodimer interacts with components of the antigen processing machinery TAPBP and TAP1-TAP2 complex; this interaction is required for peptide loading and translocation to the cell surface. Interacts with CALCR; this interaction is required for appropriate folding. The optimum binding peptide is a nonamer (VL9) that is primarily derived from amino-acid residues 3-11 of the signal sequences of most HLA-A, -B, -C and -G molecules. The VL9 peptide anchors to five main sites in the peptide-binding groove of HLA-E. Peptide-bound HLA-E-B2M complex interacts with KLRD1-KLRC1 receptor on NK cells. Binds with lower affinity to activating KLRD1-KLRC2. The common subunit KLRC1 plays a prominent role in directly interacting with HLA-E. Peptide-bound HLA-E-B2M interacts with the alpha-beta TCR on unconventional CD8+ T cells. Peptide-free HLA-E interacts with HLA-F-B2M complex; this interaction may regulate the intracellular trafficking and the stability of peptide-free MHC class I open conformers (OCs). N-glycosylated. Post-translationally, the soluble form (sHLA-E) can be partly produced by proteolytic cleavage at the cell surface (shedding) by a matrix metalloproteinase. Alternative splicing is also suggested as a mechanism for generation of sHLA-E, although it remains to be proved. In terms of tissue distribution, expressed in secretory endometrial cells during pregnancy (at protein level). The expression in nonlymphoid tissues is restricted to endothelial cells from all types of vessels, including arteries, veins, capillaries, and lymphatics (at protein level). In lymphoid organs, it is mainly expressed in endothelial venules, B and T cells, monocytes, macrophages, NK cells and megakaryocytes (at protein level).

It is found in the cell membrane. The protein resides in the golgi apparatus membrane. It localises to the secreted. Non-classical major histocompatibility class Ib molecule involved in immune self-nonself discrimination. In complex with B2M/beta-2-microglobulin binds nonamer self-peptides derived from the signal sequence of classical MHC class Ia molecules (VL9 peptides - VMAPRT[V/L][L/V/I/F]L). Peptide-bound HLA-E-B2M heterotrimeric complex primarily functions as a ligand for natural killer (NK) cell inhibitory receptor KLRD1-KLRC1, enabling NK cells to monitor the expression of other MHC class I molecules in healthy cells and to tolerate self. Upon cellular stress, preferentially binds signal sequence-derived peptides from stress-induced chaperones and is no longer recognized by NK cell inhibitory receptor KLRD1-KLRC1, resulting in impaired protection from NK cells. Binds signal sequence-derived peptides from non-classical MHC class Ib HLA-G molecules and acts as a ligand for NK cell activating receptor KLRD1-KLRC2, likely playing a role in the generation and effector functions of adaptive NK cells and in maternal-fetal tolerance during pregnancy. Besides self-peptides, can also bind and present pathogen-derived peptides conformationally similar to VL9 peptides to alpha-beta T cell receptor (TCR) on unconventional CD8-positive cytotoxic T cells, ultimately triggering antimicrobial immune response. Presents HIV gag peptides (immunodominant KAFSPEVIPMF and subdominant KALGPAATL epitopes) predominantly to CD8-positive T cell clones expressing a TRAV17-containing TCR, triggering HLA-E-restricted T cell responses. Presents mycobacterial peptides to HLA-E-restricted CD8-positive T cells eliciting both cytotoxic and immunoregulatory functions. Its function is as follows. (Microbial infection) Viruses like human cytomegalovirus have evolved an escape mechanism whereby virus-induced down-regulation of host MHC class I molecules is coupled to the binding of viral peptides to HLA-E, restoring HLA-E expression and inducing HLA-E-dependent NK cell immune tolerance to infected cells. Functionally, (Microbial infection) May bind HIV-1 gag/Capsid protein p24-derived peptide (AISPRTLNA) on infected cells and may inhibit NK cell cytotoxicity, a mechanism that allows HIV-1 to escape immune recognition. In terms of biological role, (Microbial infection) Upon SARS-CoV-2 infection, may contribute to functional exhaustion of cytotoxic NK cells and CD8-positive T cells. Binds SARS-CoV-2 S/Spike protein S1-derived peptide (LQPRTFLL) expressed on the surface of lung epithelial cells, inducing NK cell exhaustion and dampening of antiviral immune surveillance. The polypeptide is HLA class I histocompatibility antigen, alpha chain E (Homo sapiens (Human)).